A 409-amino-acid chain; its full sequence is Phosphoglycerate kinase (409 aa).

Substrate contacts are provided by residues 22–24 (DLN), R37, 60–63 (HLSR), R122, and R164. ATP is bound by residues K215, E338, and 365–368 (GGDS).

Belongs to the phosphoglycerate kinase family. As to quaternary structure, monomer.

The protein resides in the cytoplasm. It carries out the reaction (2R)-3-phosphoglycerate + ATP = (2R)-3-phospho-glyceroyl phosphate + ADP. Its pathway is carbohydrate degradation; glycolysis; pyruvate from D-glyceraldehyde 3-phosphate: step 2/5. This is Phosphoglycerate kinase (pgk) from Mycoplasma pneumoniae (strain ATCC 29342 / M129 / Subtype 1) (Mycoplasmoides pneumoniae).